Reading from the N-terminus, the 244-residue chain is MRKIYQRVLLKLSGEALMGSLGYGIDPAVVQGIAQEVAEVAATGIQIAIVVGGGNIFRGVKAASKGMDRATADYVGMIATVMNAITLQDALEQVGVPTRVQTAIAMQELAEPYIRRRAIRHLEKGRVVVFGAGSGNPFFTTDTTAALRAAEIEAEVIFKATKVDGVYDSDPHKNQEAKRYESLSYGEVLTLDLRVMDSTAIALCKENNIPIIVFNLSVSGNICKAVMGEKIGTIVGGFHESKRS.

11–14 contributes to the ATP binding site; that stretch reads KLSG. Residues 19-24 are involved in allosteric activation by GTP; the sequence is GSLGYG. UMP is bound at residue G53. ATP-binding residues include G54 and R58. UMP is bound by residues D73 and 134 to 141; that span reads SGNPFFTT. ATP-binding residues include T161, Y167, and D170.

This sequence belongs to the UMP kinase family. Homohexamer.

It localises to the cytoplasm. The catalysed reaction is UMP + ATP = UDP + ADP. The protein operates within pyrimidine metabolism; CTP biosynthesis via de novo pathway; UDP from UMP (UMPK route): step 1/1. Allosterically activated by GTP. Inhibited by UTP. Functionally, catalyzes the reversible phosphorylation of UMP to UDP. This Trichodesmium erythraeum (strain IMS101) protein is Uridylate kinase.